The primary structure comprises 428 residues: Nucleoside diphosphate phosphatase ENTPD5 (428 aa).

Positions 1 to 24 (MATSWGTVFFMLVVSCVCSAVSHR) are cleaved as a signal peptide. Residue E172 is the Proton acceptor of the active site. A glycan (N-linked (GlcNAc...) asparagine) is linked at N232. 2 disulfides stabilise this stretch: C272-C303 and C363-C377. N368 carries N-linked (GlcNAc...) asparagine glycosylation.

Belongs to the GDA1/CD39 NTPase family. Monomer; active form. Homodimer; disulfide-linked. Homodimers are enzymatically inactive. The cofactor is Ca(2+). It depends on Mg(2+) as a cofactor. N-glycosylated; high-mannose type. Glycosylation is not essential for enzymatic activity. In terms of tissue distribution, expressed in adult liver, kidney, prostate, testis and colon. Much weaker expression in other tissues.

It localises to the endoplasmic reticulum. The protein localises to the secreted. The enzyme catalyses a ribonucleoside 5'-diphosphate + H2O = a ribonucleoside 5'-phosphate + phosphate + H(+). It carries out the reaction GDP + H2O = GMP + phosphate + H(+). The catalysed reaction is UDP + H2O = UMP + phosphate + H(+). It catalyses the reaction IDP + H2O = IMP + phosphate + H(+). The enzyme catalyses CDP + H2O = CMP + phosphate + H(+). It carries out the reaction ADP + H2O = AMP + phosphate + H(+). It functions in the pathway protein modification; protein glycosylation. In terms of biological role, hydrolyzes nucleoside diphosphates with a preference for GDP, IDP and UDP compared to ADP and CDP. In the lumen of the endoplasmic reticulum, hydrolyzes UDP that acts as an end-product feedback inhibitor of the UDP-Glc:glycoprotein glucosyltransferases. UMP can be transported back by an UDP-sugar antiporter to the cytosol where it is consumed to regenerate UDP-glucose. Therefore, it positively regulates protein reglucosylation by clearing UDP from the ER lumen and by promoting the regeneration of UDP-glucose. Protein reglucosylation is essential to proper glycoprotein folding and quality control in the ER. The protein is Nucleoside diphosphate phosphatase ENTPD5 of Homo sapiens (Human).